Reading from the N-terminus, the 166-residue chain is Urease accessory protein UreE 2 (166 aa).

Residues 135 to 154 (EHGAYGGGHHHSRAGEEDFN) form a disordered region.

It belongs to the UreE family.

The protein localises to the cytoplasm. In terms of biological role, involved in urease metallocenter assembly. Binds nickel. Probably functions as a nickel donor during metallocenter assembly. This chain is Urease accessory protein UreE 2, found in Pseudomonas syringae pv. syringae (strain B728a).